A 166-amino-acid chain; its full sequence is Co-chaperone protein HscB homolog (166 aa).

The J domain maps to 3–75 (QYFTLFRIEP…IDRAAYLLKT (73 aa)).

The protein belongs to the HscB family. As to quaternary structure, interacts with HscA and stimulates its ATPase activity.

In terms of biological role, co-chaperone involved in the maturation of iron-sulfur cluster-containing proteins. Seems to help targeting proteins to be folded toward HscA. In Neisseria meningitidis serogroup A / serotype 4A (strain DSM 15465 / Z2491), this protein is Co-chaperone protein HscB homolog.